Reading from the N-terminus, the 954-residue chain is Calsyntenin-1 (954 aa).

The N-terminal stretch at 1–25 is a signal peptide; sequence MRIRGVKPFASAVGLLLGLLYAVDA. Topologically, residues 26–833 are extracellular; that stretch reads AKVNKHKPWI…THQASVVPSA (808 aa). Cadherin domains follow at residues 35 to 151 and 152 to 252; these read IETT…SPVF and KEKS…KPSW. N-linked (GlcNAc...) asparagine glycosylation is found at asparagine 333, asparagine 353, and asparagine 552. The chain crosses the membrane as a helical span at residues 834–854; it reads ATIVIVVCVSFLVFMIILGVF. Residues 855-954 are Cytoplasmic-facing; sequence RIRAAHQRTM…LEWDDSTLTY (100 aa). The segment at 891-954 is disordered; it reads TYEDQHSSEE…LEWDDSTLTY (64 aa). The segment covering 900-935 has biased composition (acidic residues); the sequence is EEGDEEEEESEDGEEEDDITSAESDSSEDEAGEQED.

The protein belongs to the calsyntenin family. As to quaternary structure, homooligomer and heterooligomer; mediates both homophilic and heterophilc interactions with clstn2 and clstn3 paralogs via cadherin domains. In terms of tissue distribution, by 48 hours post-fertilization (hpf), widely expressed in the brain, with strong expression in the telencephalon and the midbrain.

The protein localises to the postsynaptic cell membrane. It is found in the endoplasmic reticulum membrane. Its subcellular location is the golgi apparatus membrane. The protein resides in the cell projection. It localises to the neuron projection. Its function is as follows. Postsynaptic adhesion molecule involved in vesicle trafficking; required for branching of peripheral but not central axons of sensory neurons. Promotes synapse development by acting as a cell adhesion molecule at the postsynaptic membrane, which associates with presynaptic neurexins. In Danio rerio (Zebrafish), this protein is Calsyntenin-1.